The chain runs to 956 residues: Probable hypoxanthine oxidase XdhD (956 aa).

Mo-molybdopterin contacts are provided by Q414, F445, and A727.

This sequence belongs to the xanthine dehydrogenase family. The cofactor is [2Fe-2S] cluster. It depends on Mo-molybdopterin as a cofactor.

Functionally, probably has no xanthine dehydrogenase activity; however deletion results in increased adenine sensitivity, suggesting that this protein contributes to the conversion of adenine to guanine nucleotides during purine salvage. The sequence is that of Probable hypoxanthine oxidase XdhD (xdhD) from Escherichia coli (strain K12).